Here is a 600-residue protein sequence, read N- to C-terminus: L-galactono-1,4-lactone dehydrogenase, mitochondrial (600 aa).

The transit peptide at 1–25 (MLRSLLLRRSNARSLRPPFPPLRTL) directs the protein to the mitochondrion. The segment at 16-51 (RPPFPPLRTLCTSGQTLTPAPPPPPPPPPPISSSAS) is disordered. Residues 26 to 91 (CTSGQTLTPA…AKHKKAQIFR (66 aa)) constitute a propeptide, removed in mature form. Positions 34-46 (PAPPPPPPPPPPI) are enriched in pro residues. The helical transmembrane segment at 58 to 74 (YAGYAALALFSGAATYF) threads the bilayer. One can recognise an FAD-binding PCMH-type domain in the interval 108 to 279 (THEVQTRNFN…AEVTLQCVER (172 aa)).

The cofactor is FAD.

It localises to the mitochondrion membrane. It carries out the reaction L-galactono-1,4-lactone + 4 Fe(III)-[cytochrome c] = L-dehydroascorbate + 4 Fe(II)-[cytochrome c] + 5 H(+). Its pathway is cofactor biosynthesis; L-ascorbate biosynthesis. With respect to regulation, inhibited by sulfhydryl-modifying agents such as N-ethylmaleimide, monoiodoacetic acid and p-hydroxymercuribenzoic acid. No inhibition by riboflavin and lycorine. Involved in the biosynthesis of ascorbic acid. Uses L-galactono-1,4-lactone as substrate, but not L-gulono-1,4-lactone, D-galactono-1,4-lactone, D-gulono-1,4-lactone, D-erythronic-1,4-lactone, D-xylonic-1,4-lactone, L-mannono-1,4-lactone, D-galactonic acid, D-glucuronic acid or D-gluconic acid. FAD, NAD, NADP and O(2) cannot act as electron acceptor. This Brassica oleracea (Wild cabbage) protein is L-galactono-1,4-lactone dehydrogenase, mitochondrial.